The sequence spans 122 residues: Large ribosomal subunit protein uL14 (122 aa).

It belongs to the universal ribosomal protein uL14 family. Part of the 50S ribosomal subunit. Forms a cluster with proteins L3 and L19. In the 70S ribosome, L14 and L19 interact and together make contacts with the 16S rRNA in bridges B5 and B8.

Its function is as follows. Binds to 23S rRNA. Forms part of two intersubunit bridges in the 70S ribosome. This chain is Large ribosomal subunit protein uL14, found in Geotalea daltonii (strain DSM 22248 / JCM 15807 / FRC-32) (Geobacter daltonii).